A 271-amino-acid polypeptide reads, in one-letter code: Glutamate racemase (271 aa).

Residues 10-11 (DS) and 42-43 (YG) each bind substrate. The active-site Proton donor/acceptor is the Cys-73. 74 to 75 (NS) is a substrate binding site. The active-site Proton donor/acceptor is the Cys-183. 184–185 (TH) provides a ligand contact to substrate.

It belongs to the aspartate/glutamate racemases family.

The catalysed reaction is L-glutamate = D-glutamate. It participates in cell wall biogenesis; peptidoglycan biosynthesis. Functionally, provides the (R)-glutamate required for cell wall biosynthesis. The sequence is that of Glutamate racemase from Saccharopolyspora erythraea (strain ATCC 11635 / DSM 40517 / JCM 4748 / NBRC 13426 / NCIMB 8594 / NRRL 2338).